A 241-amino-acid chain; its full sequence is Diacetyl reductase [(S)-acetoin forming] (241 aa).

Residue 6–30 coordinates NAD(+); it reads LVTGAGQGIGKAIALRLVKDGFAVA. Ser-139 is a binding site for substrate. Tyr-152 functions as the Proton acceptor in the catalytic mechanism. Lys-156 is a catalytic residue.

The protein belongs to the short-chain dehydrogenases/reductases (SDR) family. In terms of assembly, homotetramer.

It catalyses the reaction (S)-acetoin + NAD(+) = diacetyl + NADH + H(+). In terms of biological role, catalyzes the irreversible reduction of 2,3-butanediol to (S)-acetoin in the presence of NADH. The sequence is that of Diacetyl reductase [(S)-acetoin forming] (budC) from Raoultella terrigena (Klebsiella terrigena).